Reading from the N-terminus, the 424-residue chain is UDP-N-acetylglucosamine 1-carboxyvinyltransferase (424 aa).

22–23 lines the phosphoenolpyruvate pocket; sequence KN. Arginine 98 provides a ligand contact to UDP-N-acetyl-alpha-D-glucosamine. Cysteine 122 functions as the Proton donor in the catalytic mechanism. 2-(S-cysteinyl)pyruvic acid O-phosphothioketal is present on cysteine 122. UDP-N-acetyl-alpha-D-glucosamine-binding positions include 127-131, aspartate 312, and isoleucine 334; that span reads RPVDQ.

Belongs to the EPSP synthase family. MurA subfamily.

The protein resides in the cytoplasm. The catalysed reaction is phosphoenolpyruvate + UDP-N-acetyl-alpha-D-glucosamine = UDP-N-acetyl-3-O-(1-carboxyvinyl)-alpha-D-glucosamine + phosphate. The protein operates within cell wall biogenesis; peptidoglycan biosynthesis. In terms of biological role, cell wall formation. Adds enolpyruvyl to UDP-N-acetylglucosamine. The chain is UDP-N-acetylglucosamine 1-carboxyvinyltransferase from Xanthomonas axonopodis pv. citri (strain 306).